We begin with the raw amino-acid sequence, 146 residues long: uncharacterized protein (146 aa).

This is an uncharacterized protein from Escherichia coli (strain K12).